The primary structure comprises 152 residues: Small ribosomal subunit protein bS16 (152 aa).

The interval 84–152 (WKWEASNNPQ…EAAAEEEKSE (69 aa)) is disordered. Basic and acidic residues predominate over residues 97–123 (PGQKAKELAAEKAEKEADRKAAEEEAK). The segment covering 124–144 (AAAAAPAAEEAPAEEAPAAEA) has biased composition (low complexity).

This sequence belongs to the bacterial ribosomal protein bS16 family.

The polypeptide is Small ribosomal subunit protein bS16 (Maricaulis maris (strain MCS10) (Caulobacter maris)).